Consider the following 459-residue polypeptide: Ribosomal protein uS12 methylthiotransferase RimO (459 aa).

The region spanning 11–126 (PKVGMVSLGC…VMQAVHSHLP (116 aa)) is the MTTase N-terminal domain. Cys-20, Cys-56, Cys-85, Cys-157, Cys-161, and Cys-164 together coordinate [4Fe-4S] cluster. One can recognise a Radical SAM core domain in the interval 143 to 388 (LTPRHYAYLK…MEVAEEVSAA (246 aa)). The 69-residue stretch at 391–459 (ARKVGKTLKV…ADGHDLWGEV (69 aa)) folds into the TRAM domain.

The protein belongs to the methylthiotransferase family. RimO subfamily. [4Fe-4S] cluster serves as cofactor.

It is found in the cytoplasm. It catalyses the reaction L-aspartate(89)-[ribosomal protein uS12]-hydrogen + (sulfur carrier)-SH + AH2 + 2 S-adenosyl-L-methionine = 3-methylsulfanyl-L-aspartate(89)-[ribosomal protein uS12]-hydrogen + (sulfur carrier)-H + 5'-deoxyadenosine + L-methionine + A + S-adenosyl-L-homocysteine + 2 H(+). Catalyzes the methylthiolation of an aspartic acid residue of ribosomal protein uS12. The polypeptide is Ribosomal protein uS12 methylthiotransferase RimO (Burkholderia pseudomallei (strain K96243)).